A 414-amino-acid polypeptide reads, in one-letter code: WD repeat-containing protein jip5 (414 aa).

WD repeat units lie at residues 9–48 (PLSA…SSDD), 73–112 (RHKG…VENK), 118–159 (AKDG…SNVS), 222–263 (VSSV…DQDE), and 319–356 (DETE…NDMD). The tract at residues 39–65 (RLPSEESSDDDDGTASNSSARNGKGHI) is disordered. The disordered stretch occupies residues 357–414 (VDMAGGKRMFGGDSDDSDDDNDSEDSEQEQRQPVEPQRKRKKNKGKGKRDIIAFADID). The span at 369–383 (DSDDSDDDNDSEDSE) shows a compositional bias: acidic residues. Residues 394–403 (RKRKKNKGKG) show a composition bias toward basic residues.

Belongs to the WD repeat WDR55 family.

It localises to the nucleus. It is found in the nucleolus. This is WD repeat-containing protein jip5 (jip5) from Aspergillus clavatus (strain ATCC 1007 / CBS 513.65 / DSM 816 / NCTC 3887 / NRRL 1 / QM 1276 / 107).